A 361-amino-acid polypeptide reads, in one-letter code: Phenylalanine--tRNA ligase alpha subunit (361 aa).

Glutamate 260 is a Mg(2+) binding site.

This sequence belongs to the class-II aminoacyl-tRNA synthetase family. Phe-tRNA synthetase alpha subunit type 1 subfamily. As to quaternary structure, tetramer of two alpha and two beta subunits. Mg(2+) serves as cofactor.

The protein resides in the cytoplasm. It catalyses the reaction tRNA(Phe) + L-phenylalanine + ATP = L-phenylalanyl-tRNA(Phe) + AMP + diphosphate + H(+). The sequence is that of Phenylalanine--tRNA ligase alpha subunit from Allorhizobium ampelinum (strain ATCC BAA-846 / DSM 112012 / S4) (Agrobacterium vitis (strain S4)).